Here is a 91-residue protein sequence, read N- to C-terminus: Cell division topological specificity factor (91 aa).

It belongs to the MinE family.

In terms of biological role, prevents the cell division inhibition by proteins MinC and MinD at internal division sites while permitting inhibition at polar sites. This ensures cell division at the proper site by restricting the formation of a division septum at the midpoint of the long axis of the cell. This chain is Cell division topological specificity factor, found in Chloroflexus aggregans (strain MD-66 / DSM 9485).